The primary structure comprises 294 residues: Cell division protein ZipA (294 aa).

Position 1 (M1) is a topological domain, periplasmic. A helical transmembrane segment spans residues 2-22 (EIGLREWLILIGIIVIAGILF). Over 23–294 (DGWRRMRGGK…FERRALTQKR (272 aa)) the chain is Cytoplasmic. Disordered stretches follow at residues 64-111 (THKE…GDLN) and 126-146 (KDDFVADNNRHGAAATPSTPV). Residues 82–91 (ARERERDPKP) are compositionally biased toward basic and acidic residues.

It belongs to the ZipA family. Interacts with FtsZ via their C-terminal domains.

It localises to the cell inner membrane. Functionally, essential cell division protein that stabilizes the FtsZ protofilaments by cross-linking them and that serves as a cytoplasmic membrane anchor for the Z ring. Also required for the recruitment to the septal ring of downstream cell division proteins. The sequence is that of Cell division protein ZipA from Pseudomonas entomophila (strain L48).